The chain runs to 473 residues: Photosystem II CP43 reaction center protein (473 aa).

Residues 1–14 (MKTLYSLRRFSHVE) constitute a propeptide that is removed on maturation. Position 15 is an N-acetylthreonine (threonine 15). Residue threonine 15 is modified to Phosphothreonine. Transmembrane regions (helical) follow at residues 69 to 93 (LFEV…PHLA), 134 to 155 (LLGP…KDRN), 178 to 200 (KALY…RKIT), 255 to 275 (KPFA…LSYS), and 291 to 312 (WFNN…ASQA). Glutamate 367 contributes to the [CaMn4O5] cluster binding site. A helical transmembrane segment spans residues 447–471 (RARAAAAGFEKGIDRDFEPVLSMTP).

The protein belongs to the PsbB/PsbC family. PsbC subfamily. In terms of assembly, PSII is composed of 1 copy each of membrane proteins PsbA, PsbB, PsbC, PsbD, PsbE, PsbF, PsbH, PsbI, PsbJ, PsbK, PsbL, PsbM, PsbT, PsbX, PsbY, PsbZ, Psb30/Ycf12, at least 3 peripheral proteins of the oxygen-evolving complex and a large number of cofactors. It forms dimeric complexes. Binds multiple chlorophylls and provides some of the ligands for the Ca-4Mn-5O cluster of the oxygen-evolving complex. It may also provide a ligand for a Cl- that is required for oxygen evolution. PSII binds additional chlorophylls, carotenoids and specific lipids. serves as cofactor.

It localises to the plastid membrane. Its function is as follows. One of the components of the core complex of photosystem II (PSII). It binds chlorophyll and helps catalyze the primary light-induced photochemical processes of PSII. PSII is a light-driven water:plastoquinone oxidoreductase, using light energy to abstract electrons from H(2)O, generating O(2) and a proton gradient subsequently used for ATP formation. In Cuscuta obtusiflora (Peruvian dodder), this protein is Photosystem II CP43 reaction center protein.